The following is a 920-amino-acid chain: MSYNRLGESYGEDDHSHSPMMNPHQTNNRSPSPGRPLNAYQLSDVSYGPQERLHMPSSDLLAEQPTYSVERLPNSYGHNEAYEQHHQQSYPGYEYAVDPEAHHDAYYTQPYQPTVTPHDDYDLGQYPEHQHQHSYSDDRIPMLQQDNPFGPDPYSDEYQVEEQADGHTPSPAPIRRWKTVKEVQLFNGNLVLDCPIAPKLLNQVPHAEPPGRDEFTHMRYSAATCDPNDFFEERFTLRQKLFAKPRHTELFIVVTMYNEDDFLFARTLIGVFKNIEHMCSRTHSKTWGKDAWKKIVVCVISDGRAKINPRTRAVLAALGVYQDGIAKQQVNGKDVTAHIYEYTTQIALELKGTQVQIKGRSAVPVQMIFCLKEKNQKKINSHRWFFQAFGRVLDPNICVLLDAGTKPGKDSIYRLWKAFDVEPMCGGACGEIKVMLSHGKKLLNPLVAGQNFEYKLSNILDKPMESAFGFISVLPGAFSAYRFVALQNDKNGQGPLERYFLGEKMHGANAGIFTANMYLAEDRILCFEIVTKRNCRWLLQYVKSSTGETDVPDQMAEFILQRRRWLNGSFFAAVYAIAHFYQIWRSDHSAIRKFALLIEFFYQTINMLFAWFGIGNFFLVFHILTTYLGQKDLLGTTGKVLGVVFEWLYLATLVTCFVLALGNRPGGSNKFYMTMVYFWIGIMIYLAFACIFVTVKSIQTEVQQDGFTFTDLFTNSTFFTIIVSLGSTYVMWFVASIIFLDPWHMFTSFIQYILLTPTYINVLNIYAFCNTHDITWGTKGDDKAEKLPSANLKPGGKVDVDIPQDDGDLNAQYDTELAKFAEKPPKEVQVISEEERQADYYKGFRSAVVLAWVFCNFALGAVVLSAAGLDRFDQSEKTSEDSNKRSTIYMAVVLWSVAGLSIFKFIGALWYLVVRMFRGV.

2 disordered regions span residues M1–Q41 and I140–P173. Positions Y154–Q163 are enriched in acidic residues. The next 5 membrane-spanning stretches (helical) occupy residues S466–L486, R564–W584, L608–L628, V640–A660, and M675–V695. N715 carries N-linked (GlcNAc...) asparagine glycosylation. The next 4 helical transmembrane spans lie at F718–I738, F749–C769, A847–A867, and V892–L912.

Belongs to the chitin synthase family. Class I subfamily.

It is found in the cell membrane. It carries out the reaction [(1-&gt;4)-N-acetyl-beta-D-glucosaminyl](n) + UDP-N-acetyl-alpha-D-glucosamine = [(1-&gt;4)-N-acetyl-beta-D-glucosaminyl](n+1) + UDP + H(+). Functionally, polymerizes chitin, a structural polymer of the cell wall and septum, by transferring the sugar moiety of UDP-GlcNAc to the non-reducing end of the growing chitin polymer. Involved in hyphal growth. This is Chitin synthase C from Aspergillus oryzae (strain ATCC 42149 / RIB 40) (Yellow koji mold).